A 548-amino-acid chain; its full sequence is CTL-like protein DDB_G0288717 (548 aa).

The tract at residues 1–44 is disordered; the sequence is MWAPEEDYKQPLLTNSRVANNGNNNNSNGRGGSSSPSTRLQPEH. Asn25 is a glycosylation site (N-linked (GlcNAc...) asparagine). The helical transmembrane segment at 52 to 72 threads the bilayer; it reads ILFTILFLLVIGGMAAISGIA. A glycan (N-linked (GlcNAc...) asparagine) is linked at Asn97. The next 4 membrane-spanning stretches (helical) occupy residues 125–145, 151–171, 184–204, and 226–246; these read DILI…IQLL, FFIY…GGLF, MIVG…IVYL, and PSVF…IAYW. An N-linked (GlcNAc...) asparagine glycan is attached at Asn273. 2 consecutive transmembrane segments (helical) span residues 290–310 and 350–370; these read NLMY…SAVF and FGSL…AFML. A glycan (N-linked (GlcNAc...) asparagine) is linked at Asn377. The next 3 helical transmembrane spans lie at 381–401, 442–462, and 479–499; these read KLVV…ESIV, FIGG…SALF, and IALS…IVGI. N-linked (GlcNAc...) asparagine glycosylation occurs at Asn544.

The protein belongs to the CTL (choline transporter-like) family.

The protein localises to the membrane. The polypeptide is CTL-like protein DDB_G0288717 (Dictyostelium discoideum (Social amoeba)).